The chain runs to 561 residues: Putative transport protein YbjL (561 aa).

5 helical membrane passes run 8 to 28, 32 to 52, 66 to 86, 94 to 114, and 158 to 178; these read LLNGNYILLLFVVLALGLCLG, LGSVQLGNSIGVLVVSLLLGQ, FMLFIFCVGVEAGPNFFSIFF, MLALVMVGSALLIALGLGKLF, and NLSLGYALTYLIGLVSLIVGA. RCK C-terminal domains lie at 200–288 and 292–373; these read RGLD…SFRN and VFDR…RIGF. Helical transmembrane passes span 383–403, 406–426, 447–467, 475–495, and 540–560; these read LLAFCAFFIIGLMIGMITFQF, FSFGIGNAAGLLFAGIMLGFL, FGLMVFMAGVGLSAGSGINNG, MLIAGLVVSLVPVVICFLFGA, and AIANVLLTLAGTLIVIIWPGL.

This sequence belongs to the AAE transporter (TC 2.A.81) family. YbjL subfamily.

It localises to the cell membrane. The chain is Putative transport protein YbjL from Salmonella paratyphi C (strain RKS4594).